A 466-amino-acid chain; its full sequence is Ribulose bisphosphate carboxylase large chain (466 aa).

N6,N6,N6-trimethyllysine is present on K4. Residues N113 and T163 each contribute to the substrate site. Residue K165 is the Proton acceptor of the active site. Position 167 (K167) interacts with substrate. 3 residues coordinate Mg(2+): K191, D193, and E194. K191 carries the N6-carboxylysine modification. H284 functions as the Proton acceptor in the catalytic mechanism. 3 residues coordinate substrate: R285, H317, and S369.

The protein belongs to the RuBisCO large chain family. Type I subfamily. As to quaternary structure, heterohexadecamer of 8 large chains and 8 small chains; disulfide-linked. The disulfide link is formed within the large subunit homodimers. The cofactor is Mg(2+). Post-translationally, the disulfide bond which can form in the large chain dimeric partners within the hexadecamer appears to be associated with oxidative stress and protein turnover.

It is found in the plastid. It localises to the chloroplast. The catalysed reaction is 2 (2R)-3-phosphoglycerate + 2 H(+) = D-ribulose 1,5-bisphosphate + CO2 + H2O. It catalyses the reaction D-ribulose 1,5-bisphosphate + O2 = 2-phosphoglycolate + (2R)-3-phosphoglycerate + 2 H(+). In terms of biological role, ruBisCO catalyzes two reactions: the carboxylation of D-ribulose 1,5-bisphosphate, the primary event in carbon dioxide fixation, as well as the oxidative fragmentation of the pentose substrate in the photorespiration process. Both reactions occur simultaneously and in competition at the same active site. In Aphelandra sinclairiana (Orange shrimp plant), this protein is Ribulose bisphosphate carboxylase large chain.